Reading from the N-terminus, the 441-residue chain is uncharacterized protein (441 aa).

Transmembrane regions (helical) follow at residues 62 to 82 (FLSL…FEIG), 88 to 108 (LILT…KLFG), 112 to 132 (IALT…IIAL), 154 to 174 (ALLH…LLVV), 192 to 212 (WMFF…YLLY), 224 to 244 (ALMI…GVAS), 247 to 267 (ANLS…YMVC), 312 to 332 (IVLF…ATFA), 335 to 355 (ISVM…IIFL), 363 to 383 (QGMW…NLLL), and 399 to 419 (ILCS…LLYA).

Its subcellular location is the membrane. This is an uncharacterized protein from Schizosaccharomyces pombe (strain 972 / ATCC 24843) (Fission yeast).